Here is a 673-residue protein sequence, read N- to C-terminus: FLYWCH-type zinc finger-containing protein 1 (673 aa).

The tract at residues 1–62 is disordered; sequence MPLPEPSEQD…SSTATLPNNT (62 aa). Ser21 bears the Phosphoserine mark. Positions 47–62 are enriched in polar residues; that stretch reads VASQETSSTATLPNNT. FLYWCH-type zinc fingers lie at residues 92 to 150 and 235 to 293; these read FLKT…DHCH and FLKT…SHCH. Lys110 participates in a covalent cross-link: Glycyl lysine isopeptide (Lys-Gly) (interchain with G-Cter in SUMO2). Over residues 147-158 the composition is skewed to basic and acidic residues; the sequence is DHCHPPEKEGLD. Residues 147–178 form a disordered region; sequence DHCHPPEKEGLDRKKRHRGRPPSSALPEGAEV. Residues Ser294 and Ser339 each carry the phosphoserine modification. Positions 351–402 are disordered; it reads LSRSKSKSKSKSRSKSKSKSRSRSRKRAKKQQESSQEPPEEDQDVDPRGPEF. Positions 354–379 are enriched in basic residues; it reads SKSKSKSKSRSKSKSKSRSRSRKRAK. 3 consecutive FLYWCH-type zinc fingers follow at residues 402 to 460, 490 to 548, and 581 to 639; these read FLKT…SHCH, FLKT…RHCH, and FLRT…SHCH. The disordered stretch occupies residues 646-673; that stretch reads LEALRQREKAPSAAKKKKKKKKKKKGIH. Basic residues predominate over residues 659-673; that stretch reads AKKKKKKKKKKKGIH. Lys666 is covalently cross-linked (Glycyl lysine isopeptide (Lys-Gly) (interchain with G-Cter in SUMO2)).

Interacts with CTNNB1 (when unphosphorylated), perhaps preventing interaction of CTNNB1 with TCF4, and thereby regulating transcription activation; phosphorylation of CTNNB1 may inhibit the interaction.

The protein resides in the nucleus. It localises to the chromosome. It is found in the centromere. Functionally, transcription cofactor. Negatively regulates transcription activation by catenin beta-1 CTNNB1, perhaps acting by competing with TCF4 for CTNNB1 binding. May play a role in DNA-damage response signaling. Binds specifically to DNA sequences at peri-centromeric chromatin loci. The polypeptide is FLYWCH-type zinc finger-containing protein 1 (Flywch1) (Mus musculus (Mouse)).